The chain runs to 883 residues: Alanine--tRNA ligase (883 aa).

The Zn(2+) site is built by H563, H567, C677, and H681.

It belongs to the class-II aminoacyl-tRNA synthetase family. Requires Zn(2+) as cofactor.

The protein resides in the cytoplasm. It catalyses the reaction tRNA(Ala) + L-alanine + ATP = L-alanyl-tRNA(Ala) + AMP + diphosphate. In terms of biological role, catalyzes the attachment of alanine to tRNA(Ala) in a two-step reaction: alanine is first activated by ATP to form Ala-AMP and then transferred to the acceptor end of tRNA(Ala). Also edits incorrectly charged Ser-tRNA(Ala) and Gly-tRNA(Ala) via its editing domain. This chain is Alanine--tRNA ligase, found in Cereibacter sphaeroides (strain ATCC 17029 / ATH 2.4.9) (Rhodobacter sphaeroides).